Reading from the N-terminus, the 225-residue chain is Uracil-DNA glycosylase (225 aa).

The active-site Proton acceptor is Asp-65.

It belongs to the uracil-DNA glycosylase (UDG) superfamily. UNG family.

It localises to the cytoplasm. It carries out the reaction Hydrolyzes single-stranded DNA or mismatched double-stranded DNA and polynucleotides, releasing free uracil.. Functionally, excises uracil residues from the DNA which can arise as a result of misincorporation of dUMP residues by DNA polymerase or due to deamination of cytosine. This is Uracil-DNA glycosylase from Bacillus thuringiensis (strain Al Hakam).